The following is a 328-amino-acid chain: tRNA uridine(34) hydroxylase (328 aa).

Residues 123-217 (SDPETVLIDT…YLEEVPKEKS (95 aa)) enclose the Rhodanese domain. The active-site Cysteine persulfide intermediate is Cys-177. Residues 304-328 (AKKLAQLNKQKKQQAKEAARKKAQQ) form a disordered region. A compositionally biased stretch (basic and acidic residues) spans 317–328 (QAKEAARKKAQQ).

Belongs to the TrhO family.

The catalysed reaction is uridine(34) in tRNA + AH2 + O2 = 5-hydroxyuridine(34) in tRNA + A + H2O. Its function is as follows. Catalyzes oxygen-dependent 5-hydroxyuridine (ho5U) modification at position 34 in tRNAs. The polypeptide is tRNA uridine(34) hydroxylase (Francisella tularensis subsp. holarctica (strain LVS)).